The sequence spans 97 residues: Co-chaperonin GroES (97 aa).

Belongs to the GroES chaperonin family. As to quaternary structure, heptamer of 7 subunits arranged in a ring. Interacts with the chaperonin GroEL.

It localises to the cytoplasm. Its function is as follows. Together with the chaperonin GroEL, plays an essential role in assisting protein folding. The GroEL-GroES system forms a nano-cage that allows encapsulation of the non-native substrate proteins and provides a physical environment optimized to promote and accelerate protein folding. GroES binds to the apical surface of the GroEL ring, thereby capping the opening of the GroEL channel. This chain is Co-chaperonin GroES, found in Tolumonas auensis (strain DSM 9187 / NBRC 110442 / TA 4).